Consider the following 763-residue polypeptide: Protein translocase subunit SecA 2 (763 aa).

ATP contacts are provided by residues Gln83, 101 to 105 (GEGKT), and Asp490.

The protein belongs to the SecA family. Monomer and homodimer. Part of the essential Sec protein translocation apparatus which comprises SecA, SecYEG and auxiliary proteins SecDF. Other proteins may also be involved.

The protein localises to the cell membrane. Its subcellular location is the cytoplasm. It catalyses the reaction ATP + H2O + cellular proteinSide 1 = ADP + phosphate + cellular proteinSide 2.. Part of the Sec protein translocase complex. Interacts with the SecYEG preprotein conducting channel. Has a central role in coupling the hydrolysis of ATP to the transfer of proteins into and across the cell membrane, serving as an ATP-driven molecular motor driving the stepwise translocation of polypeptide chains across the membrane. The sequence is that of Protein translocase subunit SecA 2 from Corynebacterium glutamicum (strain R).